A 302-amino-acid chain; its full sequence is Oxygen-dependent coproporphyrinogen-III oxidase (302 aa).

Residue Ser-94 coordinates substrate. A divalent metal cation contacts are provided by His-98 and His-108. Catalysis depends on His-108, which acts as the Proton donor. Position 110 to 112 (110 to 112) interacts with substrate; it reads NVR. Residues His-147 and His-177 each coordinate a divalent metal cation. The interval 242-277 is important for dimerization; that stretch reads YVEFNLVYDRGTIFGLQSGGRTESILMSLPPLVRWD. 260–262 is a substrate binding site; the sequence is GGR.

The protein belongs to the aerobic coproporphyrinogen-III oxidase family. In terms of assembly, homodimer. A divalent metal cation serves as cofactor.

Its subcellular location is the cytoplasm. The enzyme catalyses coproporphyrinogen III + O2 + 2 H(+) = protoporphyrinogen IX + 2 CO2 + 2 H2O. It participates in porphyrin-containing compound metabolism; protoporphyrin-IX biosynthesis; protoporphyrinogen-IX from coproporphyrinogen-III (O2 route): step 1/1. Involved in the heme biosynthesis. Catalyzes the aerobic oxidative decarboxylation of propionate groups of rings A and B of coproporphyrinogen-III to yield the vinyl groups in protoporphyrinogen-IX. The sequence is that of Oxygen-dependent coproporphyrinogen-III oxidase from Alcanivorax borkumensis (strain ATCC 700651 / DSM 11573 / NCIMB 13689 / SK2).